The sequence spans 867 residues: Probable beta-glucosidase A (867 aa).

The first 18 residues, 1–18, serve as a signal peptide directing secretion; sequence MRFSWLEVAVTAASLANA. N-linked (GlcNAc...) asparagine glycans are attached at residues N67, N218, and N259. D287 is an active-site residue. N-linked (GlcNAc...) asparagine glycosylation is found at N322, N329, N361, N449, N530, N549, N571, N675, and N719.

Belongs to the glycosyl hydrolase 3 family.

It is found in the secreted. The enzyme catalyses Hydrolysis of terminal, non-reducing beta-D-glucosyl residues with release of beta-D-glucose.. Its pathway is glycan metabolism; cellulose degradation. Functionally, beta-glucosidases are one of a number of cellulolytic enzymes involved in the degradation of cellulosic biomass. Catalyzes the last step releasing glucose from the inhibitory cellobiose. This Aspergillus clavatus (strain ATCC 1007 / CBS 513.65 / DSM 816 / NCTC 3887 / NRRL 1 / QM 1276 / 107) protein is Probable beta-glucosidase A (bglA).